A 75-amino-acid polypeptide reads, in one-letter code: Notewaprin-b (75 aa).

A signal peptide spans 1 to 24 (MSSGGLLLLLGLLTLWAELTPVSS). The WAP domain occupies 27–72 (RPKKPGLCPPRPQKPPCVRECKNDWICPGEQKCCRYGCIYECRDPI). Disulfide bonds link C34–C60, C43–C64, C47–C59, and C53–C68.

It belongs to the venom waprin family. As to expression, expressed by the venom gland.

It is found in the secreted. Functionally, damages membranes of susceptible bacteria. Has no hemolytic activity. Not toxic to mice. Does not inhibit the proteinases elastase and cathepsin G. In Notechis scutatus scutatus (Mainland tiger snake), this protein is Notewaprin-b.